Consider the following 241-residue polypeptide: Dephospho-CoA kinase CAB5 (241 aa).

In terms of domain architecture, DPCK spans 3–211 (VVGLTGGIAC…PSKLRTVLEY (209 aa)). 8–15 (GGIACGKS) serves as a coordination point for ATP.

The protein belongs to the CoaE family.

Its subcellular location is the endoplasmic reticulum. The protein localises to the mitochondrion. It localises to the nucleus. The catalysed reaction is 3'-dephospho-CoA + ATP = ADP + CoA + H(+). The protein operates within cofactor biosynthesis; coenzyme A biosynthesis; CoA from (R)-pantothenate: step 5/5. Catalyzes the phosphorylation of the 3'-hydroxyl group of dephosphocoenzyme A to form coenzyme A. The polypeptide is Dephospho-CoA kinase CAB5 (CAB5) (Saccharomyces cerevisiae (strain ATCC 204508 / S288c) (Baker's yeast)).